The following is a 201-amino-acid chain: Glutathione S-transferase (201 aa).

Residues 1–81 form the GST N-terminal domain; sequence MKLYYKVGAC…YIGDHSDVAA (81 aa). Residues Cys10, Lys35, Val52, 65–66, and 102–105 each bind glutathione; these read QN and SDLH. The GST C-terminal domain occupies 87–201; it reads GSIERARLQE…QKAFKEEGLN (115 aa).

This sequence belongs to the GST superfamily. Beta family. As to quaternary structure, homodimer.

The protein localises to the cytoplasm. The catalysed reaction is RX + glutathione = an S-substituted glutathione + a halide anion + H(+). Functionally, conjugation of reduced glutathione to a wide number of exogenous and endogenous hydrophobic electrophiles. This chain is Glutathione S-transferase (gst), found in Brucella anthropi (Ochrobactrum anthropi).